Reading from the N-terminus, the 91-residue chain is UPF0250 protein NMC1112 (91 aa).

This sequence belongs to the UPF0250 family.

This is UPF0250 protein NMC1112 from Neisseria meningitidis serogroup C / serotype 2a (strain ATCC 700532 / DSM 15464 / FAM18).